Reading from the N-terminus, the 510-residue chain is ATP synthase subunit alpha (510 aa).

170-177 is a binding site for ATP; it reads GDRQTGKT.

Belongs to the ATPase alpha/beta chains family. F-type ATPases have 2 components, CF(1) - the catalytic core - and CF(0) - the membrane proton channel. CF(1) has five subunits: alpha(3), beta(3), gamma(1), delta(1), epsilon(1). CF(0) has three main subunits: a(1), b(2) and c(9-12). The alpha and beta chains form an alternating ring which encloses part of the gamma chain. CF(1) is attached to CF(0) by a central stalk formed by the gamma and epsilon chains, while a peripheral stalk is formed by the delta and b chains.

Its subcellular location is the cell inner membrane. The enzyme catalyses ATP + H2O + 4 H(+)(in) = ADP + phosphate + 5 H(+)(out). In terms of biological role, produces ATP from ADP in the presence of a proton gradient across the membrane. The alpha chain is a regulatory subunit. This is ATP synthase subunit alpha from Maricaulis maris (strain MCS10) (Caulobacter maris).